Reading from the N-terminus, the 731-residue chain is Alpha-1,4-glucan:maltose-1-phosphate maltosyltransferase (731 aa).

The segment covering Met1–Ala10 has biased composition (basic and acidic residues). The disordered stretch occupies residues Met1–Ala31. Over residues Ala15–Ala27 the composition is skewed to basic residues. Alpha-maltose 1-phosphate-binding residues include Lys321, Gln381, and Asp416. Asp451 functions as the Nucleophile in the catalytic mechanism. Position 452 (Asn452) interacts with alpha-maltose 1-phosphate. Glu480 serves as the catalytic Proton donor. Lys590–Phe591 provides a ligand contact to alpha-maltose 1-phosphate.

It belongs to the glycosyl hydrolase 13 family. GlgE subfamily. Homodimer.

It catalyses the reaction alpha-maltose 1-phosphate + [(1-&gt;4)-alpha-D-glucosyl](n) = [(1-&gt;4)-alpha-D-glucosyl](n+2) + phosphate. In terms of biological role, maltosyltransferase that uses maltose 1-phosphate (M1P) as the sugar donor to elongate linear or branched alpha-(1-&gt;4)-glucans. Is involved in a branched alpha-glucan biosynthetic pathway from trehalose, together with TreS, Mak and GlgB. The polypeptide is Alpha-1,4-glucan:maltose-1-phosphate maltosyltransferase (Bifidobacterium animalis subsp. lactis (strain Bl-04 / DGCC2908 / RB 4825 / SD5219)).